The primary structure comprises 231 residues: D-allulose-6-phosphate 3-epimerase (231 aa).

Substrate is bound at residue Ser-6. His-30, Asp-32, and His-63 together coordinate a divalent metal cation. The active-site Proton acceptor is the Asp-32. Substrate is bound by residues His-63, 140–143, 173–175, and 195–197; these read GFAG, DGS, and GTS. An a divalent metal cation-binding site is contributed by Asp-173. Asp-173 serves as the catalytic Proton donor.

It belongs to the ribulose-phosphate 3-epimerase family. AlsE subfamily. In terms of assembly, homohexamer. Trimer of dimers. Co(2+) serves as cofactor. Mn(2+) is required as a cofactor. Requires Zn(2+) as cofactor.

The catalysed reaction is D-allulose 6-phosphate = keto-D-fructose 6-phosphate. Its pathway is carbohydrate degradation; D-allose degradation. Catalyzes the reversible epimerization of D-allulose 6-phosphate to D-fructose 6-phosphate. Can also catalyze with lower efficiency the reversible epimerization of D-ribulose 5-phosphate to D-xylulose 5-phosphate. This is D-allulose-6-phosphate 3-epimerase from Escherichia coli (strain K12).